Consider the following 316-residue polypeptide: tRNA pseudouridine synthase B (316 aa).

The active-site Nucleophile is the D47.

It belongs to the pseudouridine synthase TruB family. Type 1 subfamily.

The enzyme catalyses uridine(55) in tRNA = pseudouridine(55) in tRNA. Functionally, responsible for synthesis of pseudouridine from uracil-55 in the psi GC loop of transfer RNAs. This is tRNA pseudouridine synthase B from Aliivibrio fischeri (strain MJ11) (Vibrio fischeri).